A 411-amino-acid chain; its full sequence is NADH-quinone oxidoreductase subunit D 2 (411 aa).

The protein belongs to the complex I 49 kDa subunit family. NDH-1 is composed of 14 different subunits. Subunits NuoB, C, D, E, F, and G constitute the peripheral sector of the complex.

It localises to the cell membrane. The enzyme catalyses a quinone + NADH + 5 H(+)(in) = a quinol + NAD(+) + 4 H(+)(out). In terms of biological role, NDH-1 shuttles electrons from NADH, via FMN and iron-sulfur (Fe-S) centers, to quinones in the respiratory chain. The immediate electron acceptor for the enzyme in this species is believed to be ubiquinone. Couples the redox reaction to proton translocation (for every two electrons transferred, four hydrogen ions are translocated across the cytoplasmic membrane), and thus conserves the redox energy in a proton gradient. The sequence is that of NADH-quinone oxidoreductase subunit D 2 from Chloroflexus aurantiacus (strain ATCC 29366 / DSM 635 / J-10-fl).